Consider the following 162-residue polypeptide: ATP synthase subunit b (162 aa).

Residues 2–22 traverse the membrane as a helical segment; sequence LEFNATLLAQIVDFIILLIFL.

Belongs to the ATPase B chain family. In terms of assembly, F-type ATPases have 2 components, F(1) - the catalytic core - and F(0) - the membrane proton channel. F(1) has five subunits: alpha(3), beta(3), gamma(1), delta(1), epsilon(1). F(0) has three main subunits: a(1), b(2) and c(10-14). The alpha and beta chains form an alternating ring which encloses part of the gamma chain. F(1) is attached to F(0) by a central stalk formed by the gamma and epsilon chains, while a peripheral stalk is formed by the delta and b chains.

It localises to the cell membrane. F(1)F(0) ATP synthase produces ATP from ADP in the presence of a proton or sodium gradient. F-type ATPases consist of two structural domains, F(1) containing the extramembraneous catalytic core and F(0) containing the membrane proton channel, linked together by a central stalk and a peripheral stalk. During catalysis, ATP synthesis in the catalytic domain of F(1) is coupled via a rotary mechanism of the central stalk subunits to proton translocation. In terms of biological role, component of the F(0) channel, it forms part of the peripheral stalk, linking F(1) to F(0). The chain is ATP synthase subunit b from Pelotomaculum thermopropionicum (strain DSM 13744 / JCM 10971 / SI).